A 592-amino-acid chain; its full sequence is Tegument protein US23 (592 aa).

The interval 407–491 (PRSLGDGEEE…NNVVPNVERR (85 aa)) is disordered. Positions 460–481 (ADDEEQGEDDDDSGAEPMEPEE) are enriched in acidic residues.

Belongs to the herpesviridae US22 family.

It localises to the virion tegument. The protein is Tegument protein US23 (US23) of Homo sapiens (Human).